The sequence spans 556 residues: MPPPRLLFFLLFLTPMEVRPEEPLVVKVEEGDNAVLQCLKGTSDGPTQQLTWSRESPLKPFLKLSLGLPGLGIHMRPLAIWLFIFNVSQQMGGFYLCQPGPPSEKAWQPGWTVNVEGSGELFRWNVSDLGGLGCGLKNRSSEGPSSPSGKLMSPKLYVWAKDRPEIWEGEPPCLPPRDSLNQSLSQDLTMAPGSTLWLSCGVPPDSVSRGPLSWTHVHPKGPKSLLSLELKDDRPARDMWVMETGLLLPRATAQDAGKYYCHRGNLTMSFHLEITARPVLWHWLLRTGGWKVSAVTLAYLIFCLCSLVGILHLQRALVLRRKRKRMTDPTRRFFKVTPPPGSGPQNQYGNVLSLPTPTSGLGRAQRWAAGLGGTAPSYGNPSSDVQADGALGSRSPPGVGPEEEEGEGYEEPDSEEDSEFYENDSNLGQDQLSQDGSGYENPEDEPLGPEDEDSFSNAESYENEDEELTQPVARTMDFLSPHGSAWDPSREATSLGSQSYEDMRGILYAAPQLRSIRGQPGPNHEEDADSYENMDNPDGPDPAWGGGGRMGTWSTR.

Positions 1–19 (MPPPRLLFFLLFLTPMEVR) are cleaved as a signal peptide. The 94-residue stretch at 20–113 (PEEPLVVKVE…EKAWQPGWTV (94 aa)) folds into the Ig-like C2-type 1 domain. The Extracellular portion of the chain corresponds to 20-291 (PEEPLVVKVE…HWLLRTGGWK (272 aa)). Cystine bridges form between cysteine 38–cysteine 261, cysteine 97–cysteine 200, and cysteine 134–cysteine 173. 4 N-linked (GlcNAc...) asparagine glycosylation sites follow: asparagine 86, asparagine 125, asparagine 138, and asparagine 181. In terms of domain architecture, Ig-like C2-type 2 spans 176–277 (PRDSLNQSLS…MSFHLEITAR (102 aa)). Serine 227 bears the Phosphoserine mark. Asparagine 265 is a glycosylation site (N-linked (GlcNAc...) asparagine). Residues 292 to 313 (VSAVTLAYLIFCLCSLVGILHL) form a helical membrane-spanning segment. Residues 314–556 (QRALVLRRKR…GGRMGTWSTR (243 aa)) are Cytoplasmic-facing. Disordered regions lie at residues 329 to 355 (PTRR…LSLP) and 372 to 497 (GGTA…SLGS). Residues 343 to 355 (GPQNQYGNVLSLP) show a composition bias toward polar residues. Phosphotyrosine is present on residues tyrosine 348, tyrosine 378, and tyrosine 409. A compositionally biased stretch (acidic residues) spans 401–422 (PEEEEGEGYEEPDSEEDSEFYE). Residues 423 to 436 (NDSNLGQDQLSQDG) are compositionally biased toward polar residues. Tyrosine 439 is subject to Phosphotyrosine. The span at 441–454 (NPEDEPLGPEDEDS) shows a compositional bias: acidic residues. Residues tyrosine 500 and tyrosine 531 each carry the phosphotyrosine modification. The segment at 513 to 556 (LRSIRGQPGPNHEEDADSYENMDNPDGPDPAWGGGGRMGTWSTR) is disordered.

In terms of assembly, interacts with CR2/CD21. Part of a complex composed of CD19, CR2/CD21, CD81 and IFITM1/CD225 in the membrane of mature B-cells. Interacts directly with CD81 (via the second extracellular domain); this interaction is initiated early during biosynthesis in the ER/pre-Golgi compartments and is essential for trafficking and compartmentalization of CD19 receptor on the cell surface of activated B cells. Interacts with VAV. Interacts with GRB2 and SOS when phosphorylated on Tyr-348 and/or Tyr-378. Interacts with PLCG2 when phosphorylated on Tyr-409. Interacts with LYN. Interacts (when tyrosine phosphorylated) with the regulatory p85 subunit of phosphatidylinositol 3-kinase (PIK3R1 or PIK3R2). Interacts with GRB2. Phosphorylated on tyrosine following B-cell activation. Phosphorylated on tyrosine residues by LYN. Tyrosine residues are phosphorylated sequentially after activation of the B cell receptor. Phosphorylation of Tyr-531 is extremely rapid, followed by phosphorylation at Tyr-409. In contrast, phosphorylation of Tyr-500 appears more slowly and is more transient, returning rapidly to basal levels. As to expression, detected on marginal zone and germinal center B cells in lymph nodes. Detected on blood B cells (at protein level).

Its subcellular location is the cell membrane. It localises to the membrane raft. Functions as a coreceptor for the B-cell antigen receptor complex (BCR) on B-lymphocytes. Decreases the threshold for activation of downstream signaling pathways and for triggering B-cell responses to antigens. Activates signaling pathways that lead to the activation of phosphatidylinositol 3-kinase and the mobilization of intracellular Ca(2+) stores. Is not required for early steps during B cell differentiation in the blood marrow. Required for normal differentiation of B-1 cells. Required for normal B cell differentiation and proliferation in response to antigen challenges. Required for normal levels of serum immunoglobulins, and for production of high-affinity antibodies in response to antigen challenge. This Homo sapiens (Human) protein is B-lymphocyte antigen CD19 (CD19).